We begin with the raw amino-acid sequence, 423 residues long: Glutamate-1-semialdehyde 2,1-aminomutase (423 aa).

K266 is subject to N6-(pyridoxal phosphate)lysine.

The protein belongs to the class-III pyridoxal-phosphate-dependent aminotransferase family. HemL subfamily. In terms of assembly, homodimer. Pyridoxal 5'-phosphate is required as a cofactor.

The protein localises to the cytoplasm. The catalysed reaction is (S)-4-amino-5-oxopentanoate = 5-aminolevulinate. It functions in the pathway porphyrin-containing compound metabolism; protoporphyrin-IX biosynthesis; 5-aminolevulinate from L-glutamyl-tRNA(Glu): step 2/2. This is Glutamate-1-semialdehyde 2,1-aminomutase from Desulfovibrio desulfuricans (strain ATCC 27774 / DSM 6949 / MB).